Here is a 205-residue protein sequence, read N- to C-terminus: tRNA 2-(methylsulfanyl)-N(6)-isopentenyladenosine(37) hydroxylase (205 aa).

Positions 38, 69, 72, 122, 151, and 154 each coordinate Fe cation.

Belongs to the MiaE family. Homodimer. Requires Fe cation as cofactor.

The catalysed reaction is 2-methylsulfanyl-N(6)-dimethylallyladenosine(37) in tRNA + AH2 + O2 = N(6)-[(2E)-4-hydroxy-3-methylbut-2-en-1-yl]-2-(methylsulfanyl)adenosine(37) in tRNA + A + H2O. It functions in the pathway tRNA modification; 2-methylthio-N-6-(cis-hydroxy)isopentenyl adenosine-tRNA biosynthesis. In terms of biological role, involved in specific tRNA modification. Catalyzes the oxygen-dependent hydroxylation of 2-methylthio-N-6-isopentenyl adenosine (ms2i6A) to produce 2-methylthio-N-6-(cis-hydroxy)isopentenyl adenosine (ms2io6A) at position 37 in tRNAs. The sequence is that of tRNA 2-(methylsulfanyl)-N(6)-isopentenyladenosine(37) hydroxylase from Pseudomonas putida (strain ATCC 47054 / DSM 6125 / CFBP 8728 / NCIMB 11950 / KT2440).